Here is a 655-residue protein sequence, read N- to C-terminus: p-hydroxybenzoic acid efflux pump subunit AaeB (655 aa).

11 consecutive transmembrane segments (helical) span residues 13 to 33 (FAVK…HFQL), 38 to 58 (WAVL…GGEP), 69 to 89 (LRII…IAMI), 93 to 113 (LLMI…SSLV), 121 to 141 (WGLA…EPLL), 152 to 172 (EIVI…PRSI), 370 to 390 (LFWL…IAVV), 407 to 427 (FIYG…VIIP), 431 to 451 (QSML…GIEV), 459 to 479 (MGAL…TFHF), and 482 to 502 (FLDS…VILL).

It belongs to the aromatic acid exporter ArAE (TC 2.A.85) family.

The protein resides in the cell inner membrane. Its function is as follows. Forms an efflux pump with AaeA. Could function as a metabolic relief valve, allowing to eliminate certain compounds when they accumulate to high levels in the cell. In Shigella sonnei (strain Ss046), this protein is p-hydroxybenzoic acid efflux pump subunit AaeB.